The following is a 197-amino-acid chain: MSTLLEQLIEAFRVLPGVGQKSAQRMAYHVLEREREGGRRLAAALGNAVEKVGHCVQCRDFTESEICTICASSSRDRQQLCVVESPADRLAIEHATGYRGLYFILQGRLSPLDGIGPRELGLDRLGERLAAGEVTEMIIATNATVEGEATAHYLAQLARQHAVRPSRLAQGMPLGGELEYVDRGTLSHAFGTRSEVL.

Residues 55–70 (CVQCRDFTESEICTIC) form a C4-type zinc finger. A Toprim domain is found at 78 to 173 (QQLCVVESPA…RPSRLAQGMP (96 aa)).

Belongs to the RecR family.

May play a role in DNA repair. It seems to be involved in an RecBC-independent recombinational process of DNA repair. It may act with RecF and RecO. The protein is Recombination protein RecR of Xanthomonas euvesicatoria pv. vesicatoria (strain 85-10) (Xanthomonas campestris pv. vesicatoria).